Reading from the N-terminus, the 166-residue chain is Crossover junction endodeoxyribonuclease RuvC (166 aa).

Catalysis depends on residues Asp7, Glu70, and His143. Positions 7, 70, and 143 each coordinate Mg(2+).

The protein belongs to the RuvC family. As to quaternary structure, homodimer which binds Holliday junction (HJ) DNA. The HJ becomes 2-fold symmetrical on binding to RuvC with unstacked arms; it has a different conformation from HJ DNA in complex with RuvA. In the full resolvosome a probable DNA-RuvA(4)-RuvB(12)-RuvC(2) complex forms which resolves the HJ. The cofactor is Mg(2+).

The protein resides in the cytoplasm. The catalysed reaction is Endonucleolytic cleavage at a junction such as a reciprocal single-stranded crossover between two homologous DNA duplexes (Holliday junction).. In terms of biological role, the RuvA-RuvB-RuvC complex processes Holliday junction (HJ) DNA during genetic recombination and DNA repair. Endonuclease that resolves HJ intermediates. Cleaves cruciform DNA by making single-stranded nicks across the HJ at symmetrical positions within the homologous arms, yielding a 5'-phosphate and a 3'-hydroxyl group; requires a central core of homology in the junction. The consensus cleavage sequence is 5'-(A/T)TT(C/G)-3'. Cleavage occurs on the 3'-side of the TT dinucleotide at the point of strand exchange. HJ branch migration catalyzed by RuvA-RuvB allows RuvC to scan DNA until it finds its consensus sequence, where it cleaves and resolves the cruciform DNA. In Thermus thermophilus (strain ATCC BAA-163 / DSM 7039 / HB27), this protein is Crossover junction endodeoxyribonuclease RuvC.